The primary structure comprises 30 residues: Snaclec coagulation factor IX/factor X-binding protein subunit A (30 aa).

The region spanning 1-30 (DCPSDWSPYEGHCYKHFIKWMNNEDAERFC) is the C-type lectin domain. A disulfide bridge connects residues Cys-2 and Cys-13.

The protein belongs to the snaclec family. In terms of assembly, heterodimer of subunits A and B; disulfide-linked. As to expression, expressed by the venom gland.

The protein resides in the secreted. Anticoagulant protein which binds to the gamma-carboxyglutamic acid-domain regions of factors IX (F9) and factor X (F10) in the presence of calcium with a 1 to 1 stoichiometry. This Bothrops jararaca (Jararaca) protein is Snaclec coagulation factor IX/factor X-binding protein subunit A.